The primary structure comprises 282 residues: Pantothenate synthetase (282 aa).

30–37 (MGYLHEGH) provides a ligand contact to ATP. Histidine 37 (proton donor) is an active-site residue. Position 61 (glutamine 61) interacts with (R)-pantoate. Glutamine 61 is a binding site for beta-alanine. An ATP-binding site is contributed by 147–150 (GMKD). Residue glutamine 153 coordinates (R)-pantoate. Residues valine 176 and 184-187 (KSSR) contribute to the ATP site.

This sequence belongs to the pantothenate synthetase family. As to quaternary structure, homodimer.

The protein localises to the cytoplasm. It carries out the reaction (R)-pantoate + beta-alanine + ATP = (R)-pantothenate + AMP + diphosphate + H(+). Its pathway is cofactor biosynthesis; (R)-pantothenate biosynthesis; (R)-pantothenate from (R)-pantoate and beta-alanine: step 1/1. Its function is as follows. Catalyzes the condensation of pantoate with beta-alanine in an ATP-dependent reaction via a pantoyl-adenylate intermediate. The chain is Pantothenate synthetase from Bacillus cereus (strain G9842).